A 142-amino-acid chain; its full sequence is Universal stress protein D (142 aa).

The protein belongs to the universal stress protein A family.

Its subcellular location is the cytoplasm. Required for resistance to DNA-damaging agents. The protein is Universal stress protein D (uspD) of Escherichia coli (strain K12).